The primary structure comprises 451 residues: Macrophage scavenger receptor types I and II (451 aa).

Residues Met1–Lys50 lie on the Cytoplasmic side of the membrane. At Ser27 the chain carries Phosphoserine. The chain crosses the membrane as a helical; Signal-anchor for type II membrane protein span at residues Ala51–Leu76. Positions Lys77–Arg109 are spacer. At Lys77–Leu451 the chain is on the extracellular side. N-linked (GlcNAc...) asparagine glycosylation is found at Asn82, Asn102, Asn143, Asn184, Asn221, Asn249, and Asn267. The stretch at Asn171 to Arg255 forms a coiled coil. Positions Asn267–Pro346 are disordered. Residues Gly273–Gly341 enclose the Collagen-like domain. The 101-residue stretch at Val350–Thr450 folds into the SRCR domain. Cystine bridges form between Cys375–Cys439, Cys388–Cys449, and Cys419–Cys429.

Homotrimer. Interacts with MYO18A. As to expression, isoform I, isoform II and isoform III are expressed in monocyte-derived macrophages. Isoform I and isoform II are expressed in the liver, placenta and brain.

It is found in the membrane. Functionally, membrane glycoproteins implicated in the pathologic deposition of cholesterol in arterial walls during atherogenesis. Two types of receptor subunits exist. These receptors mediate the endocytosis of a diverse group of macromolecules, including modified low density lipoproteins (LDL). Isoform III does not internalize acetylated LDL. This is Macrophage scavenger receptor types I and II (MSR1) from Homo sapiens (Human).